The following is a 534-amino-acid chain: Inorganic phosphate transporter 1-4 (534 aa).

Residues 1–24 are Cytoplasmic-facing; the sequence is MAREQLQVLNALDVAKTQWYHFTA. Residues 25-45 traverse the membrane as a helical segment; that stretch reads IIIAGMGFFTDAYDLFCISLV. The Extracellular portion of the chain corresponds to 46-70; sequence TKLLGRIYYHVEGAQKPGTLPPNVA. A helical transmembrane segment spans residues 71–91; sequence AAVNGVAFCGTLAGQLFFGWL. Over 92–99 the chain is Cytoplasmic; it reads GDKLGRKK. The chain crosses the membrane as a helical span at residues 100–120; it reads VYGMTLMVMVLCSIASGLSFG. Over 121-131 the chain is Extracellular; that stretch reads HEPKAVMATLC. The chain crosses the membrane as a helical span at residues 132–152; the sequence is FFRFWLGFGIGGDYPLSATIM. Over 153–161 the chain is Cytoplasmic; that stretch reads SEYANKKTR. Residues 162-182 traverse the membrane as a helical segment; the sequence is GAFVSAVFAMQGFGIMAGGIF. The Extracellular segment spans residues 183–211; sequence AIIISSAFEAKFPSPAYADDALGSTIPQA. Residues 212-232 form a helical membrane-spanning segment; it reads DLVWRIILMAGAIPAAMTYYS. The Cytoplasmic portion of the chain corresponds to 233 to 293; sequence RSKMPETARY…GLFSKEFMSR (61 aa). The helical transmembrane segment at 294-314 threads the bilayer; that stretch reads HGLHLLGTTSTWFLLDIAFYS. The Extracellular portion of the chain corresponds to 315–349; the sequence is QNLFQKDIFSAIGWIPPAQSMNAIQEVFKIARAQT. A helical membrane pass occupies residues 350–370; that stretch reads LIALCSTVPGYWFTVAFIDVI. At 371–372 the chain is on the cytoplasmic side; the sequence is GR. Residues 373–393 form a helical membrane-spanning segment; that stretch reads FAIQMMGFFFMTVFMFALAIP. At 394 to 403 the chain is on the extracellular side; sequence YNHWTHKENR. The chain crosses the membrane as a helical span at residues 404-424; that stretch reads IGFVIMYSLTFFFANFGPNAT. Residues 425–442 are Cytoplasmic-facing; the sequence is TFVVPAEIFPARFRSTCH. A helical membrane pass occupies residues 443-463; sequence GISAASGKLGAMVGAFGFLYL. Residues 464 to 484 are Extracellular-facing; sequence AQNPDKDKTDAGYPPGIGVRN. A helical transmembrane segment spans residues 485–505; sequence SLIVLGVVNFLGILFTFLVPE. The Cytoplasmic segment spans residues 506-534; the sequence is SKGKSLEEMSGENEDNENSNNDSRTVPIV. Residues 512–534 form a disordered region; it reads EEMSGENEDNENSNNDSRTVPIV. Phosphoserine occurs at positions 524 and 528.

This sequence belongs to the major facilitator superfamily. Phosphate:H(+) symporter (TC 2.A.1.9) family. In terms of assembly, interacts with NLA. Ubiquitinated by NLA. Ubiquitination of PHT1-4 leads to its degradation by the proteasome. In terms of tissue distribution, mostly expressed in roots, in tissues connecting the lateral roots to the primary root. Also present in flowers, in senescing anther filaments and in the abscission zone at the base of siliques. Expressed in hydathodes and axillary buds, and in some senescing leaves. After Pi starvation, localized in all cells of undifferentiated root segments, including root tips and root hairs, and in the epidermis, cortex and stellar regions of mature root segments.

The protein localises to the cell membrane. In terms of biological role, high-affinity transporter for external inorganic phosphate. Acts as a H(+):phosphate symporter in both low- and high-Pi conditions. Confers sensitivity to arsenate. In Arabidopsis thaliana (Mouse-ear cress), this protein is Inorganic phosphate transporter 1-4 (PHT1-4).